The primary structure comprises 212 residues: Thymidylate kinase (212 aa).

Residue 11-18 participates in ATP binding; that stretch reads GLEGAGKT.

This sequence belongs to the thymidylate kinase family.

The catalysed reaction is dTMP + ATP = dTDP + ADP. In terms of biological role, phosphorylation of dTMP to form dTDP in both de novo and salvage pathways of dTTP synthesis. This Buchnera aphidicola subsp. Schizaphis graminum (strain Sg) protein is Thymidylate kinase.